A 320-amino-acid chain; its full sequence is Probable cell division protein WhiA (320 aa).

A DNA-binding region (H-T-H motif) is located at residues 276–310; sequence TLKELGELVSGGKISKSGINHRLRKIDEIAERLRA.

Belongs to the WhiA family.

In terms of biological role, involved in cell division and chromosome segregation. The chain is Probable cell division protein WhiA from Geobacillus sp. (strain WCH70).